A 206-amino-acid polypeptide reads, in one-letter code: Protease (206 aa).

Residues His-55, Asp-72, and Cys-122 contribute to the active site.

Belongs to the peptidase C5 family. In terms of assembly, interacts with protease cofactor pVI-C; this interaction is necessary for protease activation.

The protein localises to the virion. The protein resides in the host nucleus. The catalysed reaction is Cleaves proteins of the adenovirus and its host cell at two consensus sites: -Yaa-Xaa-Gly-Gly-|-Xaa- and -Yaa-Xaa-Gly-Xaa-|-Gly- (in which Yaa is Met, Ile or Leu, and Xaa is any amino acid).. With respect to regulation, requires DNA and protease cofactor for maximal activation. Inside nascent virions, becomes partially activated by binding to the viral DNA, allowing it to cleave the cofactor that binds to the protease and fully activates it. Actin, like the viral protease cofactor, seems to act as a cofactor in the cleavage of cytokeratin 18 and of actin itself. Its function is as follows. Cleaves viral precursor proteins (pTP, pIIIa, pVI, pVII, pVIII, and pX) inside newly assembled particles giving rise to mature virions. Protease complexed to its cofactor slides along the viral DNA to specifically locate and cleave the viral precursors. Mature virions have a weakened organization compared to the unmature virions, thereby facilitating subsequent uncoating. Without maturation, the particle lacks infectivity and is unable to uncoat. Late in adenovirus infection, in the cytoplasm, may participate in the cytoskeleton destruction. Cleaves host cell cytoskeletal keratins K7 and K18. In Fowl adenovirus A serotype 1 (strain CELO / Phelps) (FAdV-1), this protein is Protease.